The primary structure comprises 281 residues: CCAAT/enhancer-binding protein epsilon (281 aa).

The interval 1 to 30 is disordered; that stretch reads MSHGTYYECEPRGGQQPLEFSGGRAGPGEL. Residue Lys-121 forms a Glycyl lysine isopeptide (Lys-Gly) (interchain with G-Cter in SUMO2) linkage. Ser-181 carries the post-translational modification Phosphoserine. The bZIP domain maps to 204 to 267; it reads SLEYRLRRER…DTLRNLFRQI (64 aa). The tract at residues 208–228 is basic motif; that stretch reads RLRRERNNIAVRKSRDKAKRR. Residues 230–237 form a leucine-zipper region; that stretch reads LETQQKVL.

It belongs to the bZIP family. C/EBP subfamily. In terms of assembly, binds DNA as a homodimer and as a heterodimer. Can form stable heterodimers with CEBPA, CEBPB and CEBPD. Interacts with GATA1 and SPI1. Interacts with SMARCD2. Post-translationally, phosphorylated. Strongest expression occurs in promyelocyte and late-myeloblast-like cell lines.

The protein localises to the nucleus. In terms of biological role, transcriptional activator. C/EBP are DNA-binding proteins that recognize two different motifs: the CCAAT homology common to many promoters and the enhanced core homology common to many enhancers. Required for the promyelocyte-myelocyte transition in myeloid differentiation. This Homo sapiens (Human) protein is CCAAT/enhancer-binding protein epsilon (CEBPE).